Reading from the N-terminus, the 76-residue chain is Small ribosomal subunit protein bS16 (76 aa).

This sequence belongs to the bacterial ribosomal protein bS16 family.

The chain is Small ribosomal subunit protein bS16 from Helicobacter pylori (strain HPAG1).